A 537-amino-acid polypeptide reads, in one-letter code: Sodium/hydrogen exchanger 9B2 (537 aa).

Residues 1–10 are compositionally biased toward basic and acidic residues; the sequence is MGDEDKRITY. Positions 1–28 are disordered; the sequence is MGDEDKRITYEDSEPSTGMNYTPSMHQE. Topologically, residues 1–86 are cytoplasmic; sequence MGDEDKRITY…ACPPHGLLDR (86 aa). A compositionally biased stretch (polar residues) spans 15 to 27; the sequence is PSTGMNYTPSMHQ. Ser-49 carries the post-translational modification Phosphoserine. Residues 87–104 traverse the membrane as a helical segment; the sequence is VITNVTIIVLLWAVVWSI. At 105 to 113 the chain is on the extracellular side; it reads TGSECLPGG. The helical transmembrane segment at 114 to 133 threads the bilayer; the sequence is NLFGIIILFYCAIIGGKLLG. At 134-144 the chain is on the cytoplasmic side; that stretch reads LIKLPTLPPLP. Residues 145–161 form a helical membrane-spanning segment; that stretch reads SLLGMLLAGFLIRNIPV. Topologically, residues 162 to 171 are extracellular; that stretch reads INDNVQIKHK. The chain crosses the membrane as a helical span at residues 172-189; the sequence is WSSSLRSIALSIILVRAG. The Cytoplasmic segment spans residues 190 to 200; it reads LGLDSKALKKL. A helical membrane pass occupies residues 201-227; it reads KGVCVRLSMGPCIVEACTSALLAHYLL. Residues 228-233 lie on the Extracellular side of the membrane; sequence GLPWQW. A helical transmembrane segment spans residues 234 to 242; the sequence is GFILGFVLG. The Cytoplasmic portion of the chain corresponds to 243-270; sequence AVSPAVVVPSMLLLQGGGYGVEKGVPTL. Positions 244, 275, 278, and 279 each coordinate Na(+). A helical membrane pass occupies residues 271 to 290; sequence LMAAGSFDDILAITGFNTCL. The Extracellular portion of the chain corresponds to 291 to 300; sequence GIAFSTGSTV. The helical transmembrane segment at 301–324 threads the bilayer; the sequence is FNVLRGVLEVVIGVATGSVLGFFI. The Cytoplasmic segment spans residues 325 to 339; sequence QYFPSRDQDKLVCKR. The helical transmembrane segment at 340–357 threads the bilayer; it reads TFLVLGLSVLAVFSSVHF. Over 358–361 the chain is Extracellular; the sequence is GFPG. Residues 362–373 form a helical membrane-spanning segment; it reads SGGLCTLVMAFL. At 374 to 390 the chain is on the cytoplasmic side; that stretch reads AGMGWTSEKAEVEKIIA. The helical transmembrane segment at 391–411 threads the bilayer; that stretch reads VAWDIFQPLLFGLIGAEVSIA. At 412-417 the chain is on the extracellular side; sequence SLRPET. Residues 418–440 form a helical membrane-spanning segment; the sequence is VGLCVATVGIAVLIRILTTFLMV. At 441–461 the chain is on the cytoplasmic side; that stretch reads CFAGFNLKEKIFISFAWLPKA. A helical membrane pass occupies residues 462–473; the sequence is TVQAAIGSVALD. Residues 474-486 lie on the Extracellular side of the membrane; it reads TARSHGEKQLEDY. A helical transmembrane segment spans residues 487 to 509; that stretch reads GMDVLTVAFLSILITAPIGSLLI. At 510–537 the chain is on the cytoplasmic side; sequence GLLGPRLLQKVEHQNKDEEVQGETSVQV.

The protein belongs to the monovalent cation:proton antiporter 1 (CPA1) transporter (TC 2.A.36) family. Homodimer. Dimerization is essential for SLC9B2 activity. Lipids seem to play a role in the stabilization of the dimerization subdomain. As to expression, widely expressed. High levels detected in the distal tubules of the kidney nephron. Detected in red blood cells (at protein level).

Its subcellular location is the cell membrane. It localises to the mitochondrion membrane. The protein localises to the endosome membrane. The protein resides in the recycling endosome membrane. It is found in the cytoplasmic vesicle. Its subcellular location is the secretory vesicle. It localises to the synaptic vesicle membrane. The protein localises to the cell projection. The protein resides in the cilium. It is found in the flagellum membrane. Its subcellular location is the basolateral cell membrane. It localises to the apical cell membrane. It carries out the reaction Li(+)(out) + H(+)(in) = Li(+)(in) + H(+)(out). The catalysed reaction is Li(+)(in) + Na(+)(out) = Li(+)(out) + Na(+)(in). It catalyses the reaction Na(+)(in) + H(+)(out) = Na(+)(out) + H(+)(in). With respect to regulation, allosterically inhibited by the N-terminal domain. Inhibited by phloretin. Its function is as follows. Electroneutral Na(+) Li(+)/H(+) antiporter that extrudes Na(+) or Li(+) in exchange for external protons across the membrane. Uses the proton gradient/membrane potential to extrude sodium. Contributes to the regulation of intracellular pH and sodium homeostasis. Also able to mediate Na(+)/Li(+) antiporter activity in kidney. May play a physiological role in renal tubular function and blood pressure homeostasis. Plays an important role for insulin secretion and clathrin-mediated endocytosis in beta-cells. Involved in sperm motility and fertility. It is controversial whether SLC9B2 plays a role in osteoclast differentiation or not. The chain is Sodium/hydrogen exchanger 9B2 from Homo sapiens (Human).